We begin with the raw amino-acid sequence, 318 residues long: NADH-ubiquinone oxidoreductase chain 1 (318 aa).

Transmembrane regions (helical) follow at residues 2-22 (FLINVLTVTLPILLAVAFLTL), 69-89 (FLFTIAPILALTLALTVWAPL), 102-122 (LLFILAMSSLMVYSILWSGWA), 146-166 (MTTIILSMVLMNGSFTLTAFA), 171-191 (HLWLIFPMWPLMMMWFTSTLA), 222-242 (LFFMAEYANIIMMNALTVILF), 253-273 (EISTINFVVKTMILTICFLWV), and 294-314 (LPLTLALCMWHISILISLACI).

It belongs to the complex I subunit 1 family.

It is found in the mitochondrion inner membrane. It catalyses the reaction a ubiquinone + NADH + 5 H(+)(in) = a ubiquinol + NAD(+) + 4 H(+)(out). Functionally, core subunit of the mitochondrial membrane respiratory chain NADH dehydrogenase (Complex I) that is believed to belong to the minimal assembly required for catalysis. Complex I functions in the transfer of electrons from NADH to the respiratory chain. The immediate electron acceptor for the enzyme is believed to be ubiquinone. This is NADH-ubiquinone oxidoreductase chain 1 (MT-ND1) from Mammuthus primigenius (Siberian woolly mammoth).